The sequence spans 168 residues: NADH-quinone oxidoreductase subunit I (168 aa).

4Fe-4S ferredoxin-type domains are found at residues 58–88 and 99–128; these read LRTY…IEAQ and VRYD…EGPN. [4Fe-4S] cluster contacts are provided by Cys-68, Cys-71, Cys-74, Cys-78, Cys-108, Cys-111, Cys-114, and Cys-118.

This sequence belongs to the complex I 23 kDa subunit family. As to quaternary structure, NDH-1 is composed of 14 different subunits. Subunits NuoA, H, J, K, L, M, N constitute the membrane sector of the complex. [4Fe-4S] cluster is required as a cofactor.

It localises to the cell inner membrane. The enzyme catalyses a quinone + NADH + 5 H(+)(in) = a quinol + NAD(+) + 4 H(+)(out). NDH-1 shuttles electrons from NADH, via FMN and iron-sulfur (Fe-S) centers, to quinones in the respiratory chain. The immediate electron acceptor for the enzyme in this species is believed to be ubiquinone. Couples the redox reaction to proton translocation (for every two electrons transferred, four hydrogen ions are translocated across the cytoplasmic membrane), and thus conserves the redox energy in a proton gradient. This chain is NADH-quinone oxidoreductase subunit I, found in Ehrlichia ruminantium (strain Gardel).